A 158-amino-acid chain; its full sequence is NAD(P)H-quinone oxidoreductase subunit J, chloroplastic (158 aa).

The protein belongs to the complex I 30 kDa subunit family. As to quaternary structure, NDH is composed of at least 16 different subunits, 5 of which are encoded in the nucleus.

Its subcellular location is the plastid. It localises to the chloroplast thylakoid membrane. The enzyme catalyses a plastoquinone + NADH + (n+1) H(+)(in) = a plastoquinol + NAD(+) + n H(+)(out). It catalyses the reaction a plastoquinone + NADPH + (n+1) H(+)(in) = a plastoquinol + NADP(+) + n H(+)(out). Its function is as follows. NDH shuttles electrons from NAD(P)H:plastoquinone, via FMN and iron-sulfur (Fe-S) centers, to quinones in the photosynthetic chain and possibly in a chloroplast respiratory chain. The immediate electron acceptor for the enzyme in this species is believed to be plastoquinone. Couples the redox reaction to proton translocation, and thus conserves the redox energy in a proton gradient. The sequence is that of NAD(P)H-quinone oxidoreductase subunit J, chloroplastic from Piper cenocladum (Ant piper).